The following is a 364-amino-acid chain: Appendage-associated protein (364 aa).

2 coiled-coil regions span residues 142 to 196 (IIHE…AECR) and 288 to 313 (RIAQAELAAAADALKRAADKLQALGK).

The protein resides in the secreted. Functionally, associates with actin filament appendages that are formed in the inclusion appendages of the parasitophorous vacuole during infection of the host erythrocyte. This is Appendage-associated protein from Anaplasma marginale (strain Illinois).